Here is a 271-residue protein sequence, read N- to C-terminus: Phosphatidylglycerol--prolipoprotein diacylglyceryl transferase (271 aa).

The next 7 membrane-spanning stretches (helical) occupy residues 10-30 (VALA…LVGI), 56-76 (LVFW…VLFY), 92-112 (WKGG…ALWF), 120-140 (FFQL…AGRI), 174-194 (PSQL…LWLF), 202-222 (MAVS…VEFV), and 237-257 (LTMG…LIWL). Arg-139 is a binding site for a 1,2-diacyl-sn-glycero-3-phospho-(1'-sn-glycerol).

It belongs to the Lgt family.

The protein resides in the cell inner membrane. The catalysed reaction is L-cysteinyl-[prolipoprotein] + a 1,2-diacyl-sn-glycero-3-phospho-(1'-sn-glycerol) = an S-1,2-diacyl-sn-glyceryl-L-cysteinyl-[prolipoprotein] + sn-glycerol 1-phosphate + H(+). Its pathway is protein modification; lipoprotein biosynthesis (diacylglyceryl transfer). In terms of biological role, catalyzes the transfer of the diacylglyceryl group from phosphatidylglycerol to the sulfhydryl group of the N-terminal cysteine of a prolipoprotein, the first step in the formation of mature lipoproteins. The polypeptide is Phosphatidylglycerol--prolipoprotein diacylglyceryl transferase (Pseudomonas fluorescens (strain Pf0-1)).